A 431-amino-acid polypeptide reads, in one-letter code: Divalent metal cation transporter MntH (431 aa).

Transmembrane regions (helical) follow at residues 33-53, 61-81, 110-130, 141-161, 170-190, 211-231, 258-278, 307-327, 347-367, 368-388, and 406-426; these read LLKF…PGNF, SSFN…AIFL, WIFW…EFIG, IPMI…VYME, TIIA…LFLA, AVLI…IYLH, ILIA…VSAA, GAFG…GTMA, IITM…MRVL, VLSQ…MLLI, and IVGF…LYLT.

The protein belongs to the NRAMP family.

It localises to the cell membrane. Its function is as follows. H(+)-stimulated, divalent metal cation uptake system. This chain is Divalent metal cation transporter MntH, found in Clostridium acetobutylicum (strain ATCC 824 / DSM 792 / JCM 1419 / IAM 19013 / LMG 5710 / NBRC 13948 / NRRL B-527 / VKM B-1787 / 2291 / W).